Consider the following 163-residue polypeptide: Crossover junction endodeoxyribonuclease RuvC (163 aa).

Active-site residues include Asp4, Glu65, and Asp138. Mg(2+) contacts are provided by Asp4, Glu65, and Asp138.

It belongs to the RuvC family. In terms of assembly, homodimer which binds Holliday junction (HJ) DNA. The HJ becomes 2-fold symmetrical on binding to RuvC with unstacked arms; it has a different conformation from HJ DNA in complex with RuvA. In the full resolvosome a probable DNA-RuvA(4)-RuvB(12)-RuvC(2) complex forms which resolves the HJ. Mg(2+) serves as cofactor.

Its subcellular location is the cytoplasm. It carries out the reaction Endonucleolytic cleavage at a junction such as a reciprocal single-stranded crossover between two homologous DNA duplexes (Holliday junction).. In terms of biological role, the RuvA-RuvB-RuvC complex processes Holliday junction (HJ) DNA during genetic recombination and DNA repair. Endonuclease that resolves HJ intermediates. Cleaves cruciform DNA by making single-stranded nicks across the HJ at symmetrical positions within the homologous arms, yielding a 5'-phosphate and a 3'-hydroxyl group; requires a central core of homology in the junction. The consensus cleavage sequence is 5'-(A/T)TT(C/G)-3'. Cleavage occurs on the 3'-side of the TT dinucleotide at the point of strand exchange. HJ branch migration catalyzed by RuvA-RuvB allows RuvC to scan DNA until it finds its consensus sequence, where it cleaves and resolves the cruciform DNA. The chain is Crossover junction endodeoxyribonuclease RuvC from Corynebacterium jeikeium (strain K411).